The following is a 92-amino-acid chain: Small ribosomal subunit protein uS19 (92 aa).

It belongs to the universal ribosomal protein uS19 family.

Its function is as follows. Protein S19 forms a complex with S13 that binds strongly to the 16S ribosomal RNA. This is Small ribosomal subunit protein uS19 from Azorhizobium caulinodans (strain ATCC 43989 / DSM 5975 / JCM 20966 / LMG 6465 / NBRC 14845 / NCIMB 13405 / ORS 571).